The sequence spans 37 residues: Large ribosomal subunit protein bL36c (37 aa).

Belongs to the bacterial ribosomal protein bL36 family.

It localises to the plastid. This Epifagus virginiana (Beechdrops) protein is Large ribosomal subunit protein bL36c (rpl36).